The chain runs to 493 residues: Beta-hexosaminidase Amuc_2018 (493 aa).

Residues 1–21 form the signal peptide; sequence MARPLPILGGILLSFSPPAEA. Residue R122 participates in substrate binding. Residues D151 and H214 each act as charge relay system in the active site. Residues C227 and C247 each coordinate Zn(2+). D278 is a substrate binding site. Catalysis depends on E279, which acts as the Charge relay system. The Zn(2+) site is built by C288 and C291. Substrate-binding positions include W345, 373–375, and 421–423; these read YLD and WAE.

Belongs to the glycosyl hydrolase 20 family.

The enzyme catalyses Hydrolysis of terminal non-reducing N-acetyl-D-hexosamine residues in N-acetyl-beta-D-hexosaminides.. With respect to regulation, significantly inhibited by the addition of sodium dodecyl sulfate (SDS), but not by EDTA, urea, 2-mercaptoethanol or Triton X-100. Strongly inhibited by Cu2(+) ions, in case of which the activity is decreased by 70%. No significant inhibition with Al(3+), Fe(3+), Ca(2+), Cd(2+), Mg(2+), Mn(2+), Ni(2+) and Zn(2+) ions. Strongly inhibited by PugNAc (O-(2-acetamido-2-deoxy-D-glucopyranosylideneamino) N-phenylcarbamate) in the sub-micromolar concentration range. PugNAc at a concentration of 0.5 mM decreases the activity by 50% and the addition of 1 mM PugNAc fully inhibits the enzyme. No significant reduction in the activity by alkylation using N-ethylmaleimide or 2-iodoacetamide. Functionally, hydrolyzes terminal GlcNAc residues from terminally unbranched N-glycans and from chitobiose. Hydrolyzes beta-1,6-linked N-acetylglucosamine and beta-1,4-linked N-acetylgalactosamine from pNP-alpha-GalNAc[beta1,3Gal]beta1,6GlcNAc and pNP-beta-GlcNAc-beta1,4-GalNAc substrates, respectively, as well as beta-1,2-linked N-acetylglucosamine units from the non-reducing end of N-glycans. Hydrolyzes GlcNAc residues linked to alpha1,3- or alpha1,6-mannose branch, but has low activity on substrates with more than one GlcNAc residue on one of the mannose branches. Releases terminal GlcNAc moieties from the N-glycopeptide Gly-Glu-Asn-(GlcNAc2Man3GlcNAc2)-Arg with high efficiency. Has moderate hydrolytic activity on the chitobiose moiety of N-glycopeptide substrate Gly-Glu-Asn-(GlcNAc2)-Arg. Does not hydrolyze GlcNAc residues from N-glycan structures bearing a bisecting GlcNAc moiety (beta1,4-linked GlcNAc to the beta1,4-linked core mannose). Potentially capable of cleaving the specific glycoside linkages in the process of mucin degradation in human intestinal tract. Hydrolyzes synthetic substrate pNP-beta-GlcNAc with high activity and pNP-beta-GalNAc to a lesser extent. Does not hydrolyze pNP-beta-glucose, pNP-beta-galactose, pNP-alpha-glucose, pNP-alpha-galactose, pNP-alpha-GlcNAc or pNP-alpha-fucose. This chain is Beta-hexosaminidase Amuc_2018, found in Akkermansia muciniphila (strain ATCC BAA-835 / DSM 22959 / JCM 33894 / BCRC 81048 / CCUG 64013 / CIP 107961 / Muc).